The sequence spans 309 residues: Putative S-adenosyl-L-methionine-dependent methyltransferase Mvan_0104 (309 aa).

S-adenosyl-L-methionine contacts are provided by residues aspartate 134 and 163–164 (DL).

It belongs to the UPF0677 family.

Functionally, exhibits S-adenosyl-L-methionine-dependent methyltransferase activity. In Mycolicibacterium vanbaalenii (strain DSM 7251 / JCM 13017 / BCRC 16820 / KCTC 9966 / NRRL B-24157 / PYR-1) (Mycobacterium vanbaalenii), this protein is Putative S-adenosyl-L-methionine-dependent methyltransferase Mvan_0104.